The sequence spans 174 residues: CDP-archaeol synthase (174 aa).

Helical transmembrane passes span 51–71 (LIGLLQILLAPHIAPYLAGFI), 74–94 (SLLVGYSYIALITMPFGALLG), 112–132 (MLPIADQLDFVAGAWVLTFLL), and 136–156 (WLLANFTIWVAIAVILIIPVF).

This sequence belongs to the CDP-archaeol synthase family. Requires Mg(2+) as cofactor.

It is found in the cell membrane. The enzyme catalyses 2,3-bis-O-(geranylgeranyl)-sn-glycerol 1-phosphate + CTP + H(+) = CDP-2,3-bis-O-(geranylgeranyl)-sn-glycerol + diphosphate. It participates in membrane lipid metabolism; glycerophospholipid metabolism. In terms of biological role, catalyzes the formation of CDP-2,3-bis-(O-geranylgeranyl)-sn-glycerol (CDP-archaeol) from 2,3-bis-(O-geranylgeranyl)-sn-glycerol 1-phosphate (DGGGP) and CTP. This reaction is the third ether-bond-formation step in the biosynthesis of archaeal membrane lipids. In Methanocella arvoryzae (strain DSM 22066 / NBRC 105507 / MRE50), this protein is CDP-archaeol synthase.